Here is a 689-residue protein sequence, read N- to C-terminus: UvrABC system protein B (689 aa).

Positions 1-26 (MSDASGPLQPDRPEADVPFRVEAPFD) are disordered. Positions 40 to 422 (AGYEQGAQQQ…ERAQSANVVE (383 aa)) constitute a Helicase ATP-binding domain. 53 to 60 (GVTGSGKT) lines the ATP pocket. The Beta-hairpin signature appears at 106-129 (YYNYYQPEAYVEQTDKYIEKDASI). The 163-residue stretch at 443 to 605 (QVEDLMDRID…TTPTTIEKAV (163 aa)) folds into the Helicase C-terminal domain. In terms of domain architecture, UVR spans 632–667 (ALLVEDLEARMEDAASNLEFELAADIRDRMRELREA). The tract at residues 668 to 689 (FDLDGGDAPEDPGGVAPETEDW) is disordered.

It belongs to the UvrB family. Forms a heterotetramer with UvrA during the search for lesions. Interacts with UvrC in an incision complex.

Its subcellular location is the cytoplasm. The UvrABC repair system catalyzes the recognition and processing of DNA lesions. A damage recognition complex composed of 2 UvrA and 2 UvrB subunits scans DNA for abnormalities. Upon binding of the UvrA(2)B(2) complex to a putative damaged site, the DNA wraps around one UvrB monomer. DNA wrap is dependent on ATP binding by UvrB and probably causes local melting of the DNA helix, facilitating insertion of UvrB beta-hairpin between the DNA strands. Then UvrB probes one DNA strand for the presence of a lesion. If a lesion is found the UvrA subunits dissociate and the UvrB-DNA preincision complex is formed. This complex is subsequently bound by UvrC and the second UvrB is released. If no lesion is found, the DNA wraps around the other UvrB subunit that will check the other stand for damage. The polypeptide is UvrABC system protein B (Halobacterium salinarum (strain ATCC 700922 / JCM 11081 / NRC-1) (Halobacterium halobium)).